Reading from the N-terminus, the 265-residue chain is Hydroxyethylthiazole kinase 2 (265 aa).

Position 39 (M39) interacts with substrate. ATP-binding residues include K115 and T168. A substrate-binding site is contributed by G195.

Belongs to the Thz kinase family. Mg(2+) serves as cofactor.

The catalysed reaction is 5-(2-hydroxyethyl)-4-methylthiazole + ATP = 4-methyl-5-(2-phosphooxyethyl)-thiazole + ADP + H(+). Its pathway is cofactor biosynthesis; thiamine diphosphate biosynthesis; 4-methyl-5-(2-phosphoethyl)-thiazole from 5-(2-hydroxyethyl)-4-methylthiazole: step 1/1. Functionally, catalyzes the phosphorylation of the hydroxyl group of 4-methyl-5-beta-hydroxyethylthiazole (THZ). The protein is Hydroxyethylthiazole kinase 2 of Clostridium botulinum (strain ATCC 19397 / Type A).